A 742-amino-acid polypeptide reads, in one-letter code: Protein CdcH (742 aa).

ATP contacts are provided by residues 230-237 (GPPGTGKT) and 503-510 (GPPGTGKT). Positions 722 to 742 (FKGSQGPNVNSRQGSEHIGFQ) are disordered. Polar residues predominate over residues 723 to 734 (KGSQGPNVNSRQ).

This sequence belongs to the AAA ATPase family. CDC48 subfamily.

Functionally, may be part of a transduction pathway connecting light to cell division. This chain is Protein CdcH (cdcH), found in Halobacterium salinarum (strain ATCC 700922 / JCM 11081 / NRC-1) (Halobacterium halobium).